The sequence spans 248 residues: Proteasome subunit alpha type-7 (248 aa).

Residue S130 is glycosylated (O-linked (GlcNAc) serine). Y153 carries the phosphotyrosine modification.

It belongs to the peptidase T1A family. In terms of assembly, the 26S proteasome consists of a 20S proteasome core and two 19S regulatory subunits. The 20S proteasome core is a barrel-shaped complex made of 28 subunits that are arranged in four stacked rings. The two outer rings are each formed by seven alpha subunits, and the two inner rings are formed by seven beta subunits. The proteolytic activity is exerted by three beta-subunits PSMB5, PSMB6 and PSMB7. PSMA7 interacts directly with the PSMG1-PSMG2 heterodimer which promotes 20S proteasome assembly. Interacts with HIF1A. Interacts with RAB7A. Interacts with PRKN. Interacts with ABL1 and ABL2. Interacts with EMAP2. Interacts with MAVS.

The protein resides in the cytoplasm. The protein localises to the nucleus. Component of the 20S core proteasome complex involved in the proteolytic degradation of most intracellular proteins. This complex plays numerous essential roles within the cell by associating with different regulatory particles. Associated with two 19S regulatory particles, forms the 26S proteasome and thus participates in the ATP-dependent degradation of ubiquitinated proteins. The 26S proteasome plays a key role in the maintenance of protein homeostasis by removing misfolded or damaged proteins that could impair cellular functions, and by removing proteins whose functions are no longer required. Associated with the PA200 or PA28, the 20S proteasome mediates ubiquitin-independent protein degradation. This type of proteolysis is required in several pathways including spermatogenesis (20S-PA200 complex) or generation of a subset of MHC class I-presented antigenic peptides (20S-PA28 complex). Inhibits the transactivation function of HIF-1A under both normoxic and hypoxia-mimicking conditions. The interaction with EMAP2 increases the proteasome-mediated HIF-1A degradation under the hypoxic conditions. Plays a role in hepatitis C virus internal ribosome entry site-mediated translation. Mediates nuclear translocation of the androgen receptor (AR) and thereby enhances androgen-mediated transactivation. Promotes MAVS degradation and thereby negatively regulates MAVS-mediated innate immune response. This chain is Proteasome subunit alpha type-7 (PSMA7), found in Pongo abelii (Sumatran orangutan).